Here is a 226-residue protein sequence, read N- to C-terminus: 2-amino-5-formylamino-6-ribosylaminopyrimidin-4(3H)-one 5'-monophosphate deformylase (226 aa).

Fe cation is bound by residues E29, H31, D40, and H108.

The protein belongs to the creatininase superfamily. FAPy deformylase family. In terms of assembly, homodimer. It depends on Fe(2+) as a cofactor. Requires Zn(2+) as cofactor.

The catalysed reaction is 2-amino-5-formylamino-6-(5-phospho-D-ribosylamino)pyrimidin-4(3H)-one + H2O = 2,5-diamino-6-(1-D-ribosylamino)pyrimidin-4(3H)-one 5'-phosphate + formate + H(+). Its pathway is cofactor biosynthesis; coenzyme F420 biosynthesis. The protein operates within cofactor biosynthesis; riboflavin biosynthesis. Catalyzes the hydrolysis of the formamide of 2-amino-5-formylamino-6-ribosylamino-4(3H)-pyrimidinone 5'-monophosphate (FAPy) to form 2,5-diamino-6-ribosylamino-4(3H)-pyrimidinone 5'-phosphate (APy). The sequence is that of 2-amino-5-formylamino-6-ribosylaminopyrimidin-4(3H)-one 5'-monophosphate deformylase from Methanocaldococcus vulcanius (strain ATCC 700851 / DSM 12094 / M7) (Methanococcus vulcanius).